The sequence spans 267 residues: N-formylglutamate deformylase (267 aa).

Belongs to the N-formylglutamate deformylase family. As to quaternary structure, monomer.

The catalysed reaction is N-formyl-L-glutamate + H2O = formate + L-glutamate. The protein operates within amino-acid degradation; L-histidine degradation into L-glutamate; L-glutamate from N-formimidoyl-L-glutamate (deiminase route): step 2/2. With respect to regulation, stimulated by Co(2+). Fe(2+) is also a good activator, particularly at lower concentrations, but it inhibits slightly the activity when used at concentrations over 0.1 mM. Other divalent metals tested (Cd(2+), Ca(2+), Mn(2+), Zn(2+), Ni(2+) and Mg(2+)) are not effective activators. In terms of biological role, catalyzes the hydrolysis of N-formyl-L-glutamate to formate and L-glutamate. The sequence is that of N-formylglutamate deformylase from Pseudomonas putida (Arthrobacter siderocapsulatus).